We begin with the raw amino-acid sequence, 352 residues long: Protein Wnt-3a (352 aa).

An N-terminal signal peptide occupies residues 1–18 (MAPLGYLLVLCSLKQALG). Disulfide bonds link Cys77–Cys88, Cys128–Cys136, Cys138–Cys155, Cys203–Cys217, Cys205–Cys212, Cys281–Cys312, Cys297–Cys307, Cys311–Cys351, Cys327–Cys342, Cys329–Cys339, and Cys334–Cys335. N-linked (GlcNAc...) asparagine glycosylation is present at Asn87. Ser209 is lipidated: O-palmitoleoyl serine; by PORCN. Asn298 is a glycosylation site (N-linked (GlcNAc...) asparagine).

Belongs to the Wnt family. Forms a soluble 1:1 complex with AFM; this prevents oligomerization and is required for prolonged biological activity. The complex with AFM may represent the physiological form in body fluids. Homooligomer; disulfide-linked, leading to inactivation. Interacts with APCDD1 and WLS. Component of the Wnt-Fzd-LRP5-LRP6 signaling complex that contains a WNT protein, a FZD protein and LRP5 or LRP6. Interacts directly in the complex with LRP6. Interacts with PORCN. Interacts with glypican GPC3. Interacts with PKD1 (via extracellular domain). Interacts with FZD5. In terms of processing, proteolytic processing by TIKI1 and TIKI2 promotes oxidation and formation of large disulfide-bond oligomers, leading to inactivation of WNT3A. Disulfide bonds have critical and distinct roles in secretion and activity. Loss of each conserved cysteine in WNT3A results in high molecular weight oxidized Wnt oligomers, which are formed through inter-Wnt disulfide bonding. Post-translationally, palmitoleoylation by PORCN is required for efficient binding to frizzled receptors. Palmitoleoylation is required for proper trafficking to cell surface, vacuolar acidification is critical to release palmitoleoylated WNT3A from WLS in secretory vesicles. Depalmitoleoylated by NOTUM, leading to inhibit Wnt signaling pathway, possibly by promoting disulfide bond formation and oligomerization. In terms of tissue distribution, dorsal portion of the neural tube (developing roof plate), and mesenchyme tissue surrounding the umbilical veins.

It is found in the secreted. Its subcellular location is the extracellular space. The protein resides in the extracellular matrix. Its function is as follows. Ligand for members of the frizzled family of seven transmembrane receptors. Functions in the canonical Wnt signaling pathway that results in activation of transcription factors of the TCF/LEF family. Required for normal embryonic mesoderm development and formation of caudal somites. Required for normal morphogenesis of the developing neural tube. Mediates self-renewal of the stem cells at the bottom on intestinal crypts (in vitro). The sequence is that of Protein Wnt-3a (Wnt3a) from Mus musculus (Mouse).